Consider the following 326-residue polypeptide: D-amino-acid oxidase (326 aa).

The FAD site is built by Gly18, Val19, Thr46, Thr47, Ser48, Ala52, Ala53, Val162, and Ser179. Residues Tyr222 and Arg277 each contribute to the D-proline site. D-serine contacts are provided by Tyr222 and Arg277. FAD is bound by residues Arg277, Gly303, Gly304, Gly306, and Thr308. Gly304 contacts D-proline. Gly304 serves as a coordination point for D-serine.

The protein belongs to the DAMOX/DASOX family. As to quaternary structure, monomer. The cofactor is FAD.

It localises to the cytoplasm. The protein localises to the secreted. It is found in the cell wall. The enzyme catalyses a D-alpha-amino acid + O2 + H2O = a 2-oxocarboxylate + H2O2 + NH4(+). It catalyses the reaction D-valine + O2 + H2O = 3-methyl-2-oxobutanoate + H2O2 + NH4(+). The catalysed reaction is D-leucine + O2 + H2O = 4-methyl-2-oxopentanoate + H2O2 + NH4(+). It carries out the reaction D-isoleucine + O2 + H2O = (R)-3-methyl-2-oxopentanoate + H2O2 + NH4(+). The enzyme catalyses D-tyrosine + O2 + H2O = 3-(4-hydroxyphenyl)pyruvate + H2O2 + NH4(+). It catalyses the reaction D-threonine + O2 + H2O = (S)-3-hydroxy-2-oxobutanoate + H2O2 + NH4(+). Inhibited by benzoate and phenylmethylsulfonyl fluoride (PMSF). Weakly inhibited by anthranilate, crotonate, and the amino acid-modifying agents dithionitrobenzoic acid and diethyl pyrocarbonate. Not inhibited by malonate, meso-tartrate, D-malate, or the amino acid-modifying agents iodoacetic acid or butane-2,3-dione. Its function is as follows. Catalyzes the oxidative deamination of D-amino acids with broad substrate specificity. The sequence is that of D-amino-acid oxidase from Rubrobacter xylanophilus (strain DSM 9941 / JCM 11954 / NBRC 16129 / PRD-1).